Consider the following 300-residue polypeptide: Meiotically up-regulated gene 165 protein (300 aa).

2 disordered regions span residues 1-38 and 50-109; these read MLEKGEHIEYPNTPPLHSPPESHTFSSQTDDSYFHKPS and TNSS…STLE. A compositionally biased stretch (polar residues) spans 21-38; sequence ESHTFSSQTDDSYFHKPS. Residues 52–69 are compositionally biased toward low complexity; it reads SSVPSASRSPESIASSQS. Basic residues predominate over residues 94–103; the sequence is TLRKRGRKPK.

The protein resides in the nucleus. In terms of biological role, has a role in meiosis. The sequence is that of Meiotically up-regulated gene 165 protein (mug165) from Schizosaccharomyces pombe (strain 972 / ATCC 24843) (Fission yeast).